Consider the following 463-residue polypeptide: Aromatic amino acid transport protein AroP (463 aa).

12 consecutive transmembrane segments (helical) span residues 18-38 (TMMGLGSAIGAGLFLGTGVGI), 40-60 (AAGPAVLLAYIIAGAIVVLVM), 84-104 (FGHWAGFSLGWLYWFMLIMVM), 117-137 (AWFGVEPWIPSLVCVVFFAVV), 157-177 (VAVIIAFLIIGIALIFGWLPG), 200-220 (VAAGLLAVAFAFGGIEIVTIA), 237-257 (AVIWRISVFYLGSVLVITFLM), 276-296 (ILAMANIPGTVGFMEAIIVLA), 337-357 (AVLLSMFFAFVSVGLQYWNPA), 358-378 (GLLDFLLNAVGGCLIVVWAMI), 402-422 (AHPWLGILTLVLLAGLVALML), and 431-451 (VYSVAIVYGFLVLLSFVTVNS).

The protein belongs to the amino acid-polyamine-organocation (APC) superfamily. Amino acid transporter (AAT) (TC 2.A.3.1) family.

The protein localises to the cell membrane. The enzyme catalyses L-phenylalanine(in) + H(+)(in) = L-phenylalanine(out) + H(+)(out). It catalyses the reaction L-tryptophan(in) + H(+)(in) = L-tryptophan(out) + H(+)(out). The catalysed reaction is L-tyrosine(in) + H(+)(in) = L-tyrosine(out) + H(+)(out). Functionally, permease that is involved in the active transport across the cytoplasmic membrane of all three aromatic amino acids, phenylalanine, tyrosine and tryptophan. This chain is Aromatic amino acid transport protein AroP, found in Corynebacterium glutamicum (strain ATCC 13032 / DSM 20300 / JCM 1318 / BCRC 11384 / CCUG 27702 / LMG 3730 / NBRC 12168 / NCIMB 10025 / NRRL B-2784 / 534).